Here is an 810-residue protein sequence, read N- to C-terminus: Phospholipase D alpha 2 (810 aa).

Residues 1–126 enclose the C2 domain; that stretch reads MEECLLHGRL…LHGEEVDRWV (126 aa). Position 187 (Asp187) interacts with Ca(2+). Residues 327–365 enclose the PLD phosphodiesterase 1 domain; that stretch reads TMFTHHQKIVVVDSEMPSGGSRSRRIVSFVGGLDLCDGR. Catalysis depends on residues His332, Lys334, and Asp339. His332 is a binding site for a 1,2-diacyl-sn-glycero-3-phosphate. The Ca(2+) site is built by His371 and His405. Gln521 and His661 together coordinate a 1,2-diacyl-sn-glycero-3-phosphate. One can recognise a PLD phosphodiesterase 2 domain in the interval 656–683; it reads FMIYVHTKMMIVDDEYIIIGSANINQRS. Active-site residues include His661, Lys663, and Asp668. Glu722 contributes to the Ca(2+) binding site.

Belongs to the phospholipase D family. C2-PLD subfamily. Requires Ca(2+) as cofactor. Highly expressed in roots, stems and flowers, moderately in leaves, seedlings and siliques. Not detected in dry seeds.

It localises to the cytoplasm. It is found in the membrane. The protein resides in the vacuole. Its subcellular location is the cytoplasmic vesicle. The protein localises to the clathrin-coated vesicle. The catalysed reaction is a 1,2-diacyl-sn-glycero-3-phosphocholine + H2O = a 1,2-diacyl-sn-glycero-3-phosphate + choline + H(+). Its function is as follows. Hydrolyzes glycerol-phospholipids at the terminal phosphodiesteric bond to generate phosphatidic acids (PA). Plays an important role in various cellular processes, including phytohormone action and response to stress, characterized by acidification of the cell. This Arabidopsis thaliana (Mouse-ear cress) protein is Phospholipase D alpha 2.